The primary structure comprises 37 residues: Large ribosomal subunit protein bL36 (37 aa).

It belongs to the bacterial ribosomal protein bL36 family.

In Mycoplasma pneumoniae (strain ATCC 29342 / M129 / Subtype 1) (Mycoplasmoides pneumoniae), this protein is Large ribosomal subunit protein bL36.